The sequence spans 482 residues: UDP-N-acetylmuramate--L-alanine ligase (482 aa).

Positions 1 to 26 (MPQLPMTDSAPLPTPAPSSPAQPSAQ) are disordered. An ATP-binding site is contributed by 140–146 (GTHGKTT).

It belongs to the MurCDEF family.

It is found in the cytoplasm. It carries out the reaction UDP-N-acetyl-alpha-D-muramate + L-alanine + ATP = UDP-N-acetyl-alpha-D-muramoyl-L-alanine + ADP + phosphate + H(+). The protein operates within cell wall biogenesis; peptidoglycan biosynthesis. In terms of biological role, cell wall formation. The protein is UDP-N-acetylmuramate--L-alanine ligase of Deinococcus radiodurans (strain ATCC 13939 / DSM 20539 / JCM 16871 / CCUG 27074 / LMG 4051 / NBRC 15346 / NCIMB 9279 / VKM B-1422 / R1).